Reading from the N-terminus, the 285-residue chain is Sulfotransferase 2A1 (285 aa).

3'-phosphoadenylyl sulfate-binding residues include K44, S45, G46, T47, N48, and W49. Residue H99 is the Proton acceptor of the active site. Residues R121, S129, Y184, S218, M223, R247, K248, and G249 each coordinate 3'-phosphoadenylyl sulfate.

Belongs to the sulfotransferase 1 family. As to quaternary structure, homodimer. As to expression, highly expressed in liver.

Its subcellular location is the cytoplasm. It catalyses the reaction an alcohol + 3'-phosphoadenylyl sulfate = an alkyl sulfate + adenosine 3',5'-bisphosphate + H(+). The catalysed reaction is taurolithocholate + 3'-phosphoadenylyl sulfate = taurolithocholate 3-sulfate + adenosine 3',5'-bisphosphate + H(+). The enzyme catalyses pregnenolone + 3'-phosphoadenylyl sulfate = pregnenolone sulfate + adenosine 3',5'-bisphosphate + H(+). It carries out the reaction 3beta-hydroxyandrost-5-en-17-one + 3'-phosphoadenylyl sulfate = dehydroepiandrosterone 3-sulfate + adenosine 3',5'-bisphosphate + H(+). It catalyses the reaction lithocholate + 3'-phosphoadenylyl sulfate = lithocholate sulfate + adenosine 3',5'-bisphosphate + H(+). The catalysed reaction is (24S)-hydroxycholesterol + 3'-phosphoadenylyl sulfate = (24S)-hydroxycholesterol 24-sulfate + adenosine 3',5'-bisphosphate + H(+). The enzyme catalyses (24S)-hydroxycholesterol + 3'-phosphoadenylyl sulfate = (24S)-hydroxycholesterol 3-sulfate + adenosine 3',5'-bisphosphate + H(+). It carries out the reaction (24S)-hydroxycholesterol 24-sulfate + 3'-phosphoadenylyl sulfate = (24S)-hydroxycholesterol 3,24-disulfate + adenosine 3',5'-bisphosphate + H(+). It catalyses the reaction androsterone + 3'-phosphoadenylyl sulfate = androsterone 3alpha-sulfate + adenosine 3',5'-bisphosphate + H(+). Sulfotransferase that utilizes 3'-phospho-5'-adenylyl sulfate (PAPS) as sulfonate donor to catalyze the sulfonation of steroids and bile acids in the liver and adrenal glands. Mediates the sulfation of a wide range of steroids and sterols, including pregnenolone, androsterone, DHEA, bile acids, cholesterol and as well many xenobiotics that contain alcohol and phenol functional groups. Sulfonation increases the water solubility of most compounds, and therefore their renal excretion, but it can also result in bioactivation to form active metabolites. Plays an important role in maintening steroid and lipid homeostasis. Plays a key role in bile acid metabolism. In addition, catalyzes the metabolic activation of potent carcinogenic polycyclic arylmethanols. This chain is Sulfotransferase 2A1 (Sult2a1), found in Mus musculus (Mouse).